The primary structure comprises 354 residues: S-adenosylmethionine:tRNA ribosyltransferase-isomerase (354 aa).

This sequence belongs to the QueA family. As to quaternary structure, monomer.

Its subcellular location is the cytoplasm. The catalysed reaction is 7-aminomethyl-7-carbaguanosine(34) in tRNA + S-adenosyl-L-methionine = epoxyqueuosine(34) in tRNA + adenine + L-methionine + 2 H(+). It functions in the pathway tRNA modification; tRNA-queuosine biosynthesis. Its function is as follows. Transfers and isomerizes the ribose moiety from AdoMet to the 7-aminomethyl group of 7-deazaguanine (preQ1-tRNA) to give epoxyqueuosine (oQ-tRNA). This is S-adenosylmethionine:tRNA ribosyltransferase-isomerase from Dichelobacter nodosus (strain VCS1703A).